The chain runs to 485 residues: Glutamyl-tRNA(Gln) amidotransferase subunit A (485 aa).

Catalysis depends on charge relay system residues lysine 79 and serine 154. Serine 178 acts as the Acyl-ester intermediate in catalysis.

The protein belongs to the amidase family. GatA subfamily. As to quaternary structure, heterotrimer of A, B and C subunits.

The enzyme catalyses L-glutamyl-tRNA(Gln) + L-glutamine + ATP + H2O = L-glutaminyl-tRNA(Gln) + L-glutamate + ADP + phosphate + H(+). In terms of biological role, allows the formation of correctly charged Gln-tRNA(Gln) through the transamidation of misacylated Glu-tRNA(Gln) in organisms which lack glutaminyl-tRNA synthetase. The reaction takes place in the presence of glutamine and ATP through an activated gamma-phospho-Glu-tRNA(Gln). This Bacillus velezensis (strain DSM 23117 / BGSC 10A6 / LMG 26770 / FZB42) (Bacillus amyloliquefaciens subsp. plantarum) protein is Glutamyl-tRNA(Gln) amidotransferase subunit A.